Reading from the N-terminus, the 733-residue chain is LMBR1 domain-containing protein 2 homolog A (733 aa).

The next 5 helical transmembrane spans lie at 1-21 (MIVI…KILH), 33-53 (VYIS…LVPI), 125-145 (FYFG…SFVL), 163-183 (AYLY…LLAV), and 191-211 (MVGF…IILM). Residues 232 to 266 (LKHLQFKAVELLNSKKKANEELIATMKVIRRIQEK) adopt a coiled-coil conformation. The next 4 membrane-spanning stretches (helical) occupy residues 386–406 (AAIV…ALAF), 423–443 (VSNI…ALTC), 468–488 (SIIF…YNFI), and 513–533 (VAPF…VIVC). Disordered stretches follow at residues 581–641 (NNIK…TSSA), 649–668 (LKKS…PYEQ), and 674–696 (ESND…TYNA). Residues 596–619 (DSTSNNPKQIFKSGSTTISKQSPP) are compositionally biased toward polar residues. Composition is skewed to low complexity over residues 620-640 (NLNV…NTSS) and 654-664 (NNNNNNNNNNN). Positions 674 to 685 (ESNDFDDDDDIE) are enriched in acidic residues.

Belongs to the LIMR family.

The protein localises to the membrane. The sequence is that of LMBR1 domain-containing protein 2 homolog A from Dictyostelium discoideum (Social amoeba).